The following is a 69-amino-acid chain: Large ribosomal subunit protein bL31 (69 aa).

Residues cysteine 16, cysteine 18, cysteine 36, and cysteine 39 each contribute to the Zn(2+) site.

The protein belongs to the bacterial ribosomal protein bL31 family. Type A subfamily. As to quaternary structure, part of the 50S ribosomal subunit. Zn(2+) is required as a cofactor.

In terms of biological role, binds the 23S rRNA. The sequence is that of Large ribosomal subunit protein bL31 from Thermosipho africanus (strain TCF52B).